The following is a 189-amino-acid chain: Small ribosomal subunit protein uS5 (189 aa).

Residues 22–85 (FVDKLVAINR…EAAKRDLIFV (64 aa)) form the S5 DRBM domain.

It belongs to the universal ribosomal protein uS5 family. Part of the 30S ribosomal subunit. Contacts proteins S4 and S8.

With S4 and S12 plays an important role in translational accuracy. Its function is as follows. Located at the back of the 30S subunit body where it stabilizes the conformation of the head with respect to the body. The protein is Small ribosomal subunit protein uS5 of Sinorhizobium fredii (strain NBRC 101917 / NGR234).